Consider the following 124-residue polypeptide: CD59 glycoprotein (124 aa).

The first 24 residues, 1–24 (MTSRGVHLLLRLLFLLAVFYSSDS), serve as a signal peptide directing secretion. The region spanning 25–101 (SLMCYHCLLP…DLCNGPEDDG (77 aa)) is the UPAR/Ly6 domain. 5 disulfide bridges follow: Cys-28–Cys-51, Cys-31–Cys-38, Cys-44–Cys-64, Cys-70–Cys-88, and Cys-89–Cys-94. An N-linked (GlcNAc...) asparagine glycan is attached at Asn-37. Gly-101 carries the GPI-anchor amidated glycine lipid modification. A propeptide spans 102–124 (TALTGRTVLLVAPLLAAARNLCL) (removed in mature form).

In terms of assembly, interacts with T-cell surface antigen CD2. N- and O-glycosylated.

It localises to the cell membrane. The protein resides in the secreted. Its function is as follows. Potent inhibitor of the complement membrane attack complex (MAC) action, which protects self-cells from damage during complement activation. Acts by binding to the beta-haipins of C8 (C8A and C8B) components of the assembling MAC, forming an intermolecular beta-sheet that prevents incorporation of the multiple copies of C9 required for complete formation of the osmolytic pore. The chain is CD59 glycoprotein from Oryctolagus cuniculus (Rabbit).